The primary structure comprises 472 residues: WASH complex subunit 1 (472 aa).

The segment at 1-51 (MPQNRSVESQAYSLPLILPDLRREEAIHQITDTLQHLQTVSNDIFSRILQR) is required for WASH complex assembly. Disordered stretches follow at residues 294-411 (DRQD…GGDL) and 429-472 (KVPA…DWES). A compositionally biased stretch (pro residues) spans 301 to 334 (LPPPPPPPPPPPPPPPPEPSALSPPAPPPPPLSI). The interval 352–472 (QGAPKEVVNP…GDGDEDDWES (121 aa)) is VCA. In terms of domain architecture, WH2 spans 364-386 (GRASLLESIRQAGGIGKANLRNV). The span at 385 to 400 (NVKEKKLEKKKMKEQE) shows a compositional bias: basic and acidic residues.

The protein belongs to the WASH1 family. As to quaternary structure, component of the WASH complex.

Its subcellular location is the early endosome membrane. It is found in the recycling endosome membrane. Its function is as follows. Acts as a nucleation-promoting factor at the surface of endosomes, where it recruits and activates the Arp2/3 complex to induce actin polymerization, playing a key role in the fission of tubules that serve as transport intermediates during endosome sorting. In Xenopus laevis (African clawed frog), this protein is WASH complex subunit 1.